We begin with the raw amino-acid sequence, 110 residues long: Phosphoribosyl-AMP cyclohydrolase (110 aa).

Mg(2+) is bound at residue Asp80. A Zn(2+)-binding site is contributed by Cys81. Mg(2+) contacts are provided by Asp82 and Asp84. Positions 97 and 104 each coordinate Zn(2+).

This sequence belongs to the PRA-CH family. Homodimer. The cofactor is Mg(2+). Zn(2+) is required as a cofactor.

The protein resides in the cytoplasm. The enzyme catalyses 1-(5-phospho-beta-D-ribosyl)-5'-AMP + H2O = 1-(5-phospho-beta-D-ribosyl)-5-[(5-phospho-beta-D-ribosylamino)methylideneamino]imidazole-4-carboxamide. Its pathway is amino-acid biosynthesis; L-histidine biosynthesis; L-histidine from 5-phospho-alpha-D-ribose 1-diphosphate: step 3/9. In terms of biological role, catalyzes the hydrolysis of the adenine ring of phosphoribosyl-AMP. This chain is Phosphoribosyl-AMP cyclohydrolase, found in Clostridium botulinum (strain Kyoto / Type A2).